The following is a 513-amino-acid chain: Maturase K (513 aa).

This sequence belongs to the intron maturase 2 family. MatK subfamily.

The protein resides in the plastid. It localises to the chloroplast. In terms of biological role, usually encoded in the trnK tRNA gene intron. Probably assists in splicing its own and other chloroplast group II introns. This is Maturase K from Molinia caerulea (Purple moor-grass).